Consider the following 398-residue polypeptide: UPF0261 protein RA0729 (398 aa).

It belongs to the UPF0261 family.

This chain is UPF0261 protein RA0729, found in Rhizobium meliloti (strain 1021) (Ensifer meliloti).